We begin with the raw amino-acid sequence, 377 residues long: WAT1-related protein At5g13670 (377 aa).

Transmembrane regions (helical) follow at residues 9 to 29, 38 to 58, 64 to 84, 99 to 119, 136 to 156, 187 to 207, 214 to 234, 251 to 271, 279 to 299, and 303 to 323; these read FIAI…AKLA, VLVA…ALIL, PKLT…EPVV, TFTS…ACVF, VGTM…GNVI, IMLV…AKIL, LSLT…MGLI, LLAS…IGWA, FVSA…TFVF, and VYVG…LVLW. EamA domains follow at residues 18-149 and 194-322; these read LYAL…MLMT and FSWS…YLVL.

It belongs to the drug/metabolite transporter (DMT) superfamily. Plant drug/metabolite exporter (P-DME) (TC 2.A.7.4) family.

Its subcellular location is the membrane. This is WAT1-related protein At5g13670 from Arabidopsis thaliana (Mouse-ear cress).